Reading from the N-terminus, the 825-residue chain is Osmosensitive cation channel TMEM63C (825 aa).

At 1–50 (MAFESWPAGGVRPVEELDVRSFLMEENSTAERCYRSHSRSSVLQGLPFGG) the chain is on the extracellular side. A helical transmembrane segment spans residues 51 to 75 (VPTVLAINVVLWLILLLIFSCLRKA). Residues 76-141 (AWDYGRLALL…KDEEIRSKCG (66 aa)) are Cytoplasmic-facing. The disordered stretch occupies residues 98-117 (EQSEKEKTPSDSSPSDSETK). Residues 142–174 (IDAVTYLSFQRHIILLMMVVCLLSLTIILPVNL) traverse the membrane as a helical segment. At 175-198 (SGNLLGDNPENFGRTTVVNVPAQN) the chain is on the extracellular side. A helical membrane pass occupies residues 199–223 (IFLWLHSIFALLYFVITVLCMAHHS). The Cytoplasmic portion of the chain corresponds to 224–418 (SRLEYREDEK…IIWENLSVCG (195 aa)). A helical membrane pass occupies residues 419-448 (PRWWLRCILLNILLFLLLFFLTTPAIIVNT). The Extracellular segment spans residues 449-463 (MDKFNVTRPVESLRN). Residues 464–493 (PVITQFFPTLLLWAFSILLPFIVYYSSFFE) form a helical membrane-spanning segment. Residues 494 to 497 (YHWT) lie on the Cytoplasmic side of the membrane. A helical transmembrane segment spans residues 498-534 (RSGENQVTMHKCFLLLVFMVIILPSLGLSSLNLFFRW). At 535-557 (LFDVRFLDETDVKFQCVFLPDNG) the chain is on the extracellular side. Residues 558–590 (AFFVNYVITSSLIGTAMELLRIPALLVYSLRLC) traverse the membrane as a helical segment. Topologically, residues 591 to 610 (FAKSKAECIHVKISQAYEFQ) are cytoplasmic. A helical transmembrane segment spans residues 611-629 (FGLEYAWTMCIFSVSMTYS). The Extracellular portion of the chain corresponds to 630–632 (ITC). A helical membrane pass occupies residues 633–657 (PVIVPFGLLYLVLKHMVDRYNIYYA). Topologically, residues 658 to 664 (YTPTKLN) are cytoplasmic. Residues 665–693 (QRIHAAAISQVVVAPILCMFWLLFFSVLR) form a helical membrane-spanning segment. Residues 694 to 698 (LGPVQ) are Extracellular-facing. The helical transmembrane segment at 699–719 (PITLFTFITLLCSIAFSCFGF) threads the bilayer. The Cytoplasmic segment spans residues 720–825 (CMKKLRADRS…LLMDSPVAFQ (106 aa)). The segment at 777-825 (SPAHQSYGTMVNSQSSVRDAEEDEEKDLEETLETELKDDLLMDSPVAFQ) is disordered. Polar residues predominate over residues 779–793 (AHQSYGTMVNSQSSV). A compositionally biased stretch (acidic residues) spans 796–809 (AEEDEEKDLEETLE).

This sequence belongs to the CSC1 (TC 1.A.17) family. Monomer.

It localises to the endoplasmic reticulum membrane. It is found in the cell membrane. It carries out the reaction Ca(2+)(in) = Ca(2+)(out). Functionally, acts as an osmosensitive cation channel preferentially activated upon hypotonic stress. In contrast to tmem63b, does not show phospholipid scramblase activity. Required for the functional integrity of the kidney glomerular filtration barrier. The sequence is that of Osmosensitive cation channel TMEM63C (tmem63c) from Danio rerio (Zebrafish).